A 118-amino-acid chain; its full sequence is Large ribosomal subunit protein uL18 (118 aa).

The protein belongs to the universal ribosomal protein uL18 family. As to quaternary structure, part of the 50S ribosomal subunit; part of the 5S rRNA/L5/L18/L25 subcomplex. Contacts the 5S and 23S rRNAs.

This is one of the proteins that bind and probably mediate the attachment of the 5S RNA into the large ribosomal subunit, where it forms part of the central protuberance. The chain is Large ribosomal subunit protein uL18 from Rickettsia bellii (strain OSU 85-389).